We begin with the raw amino-acid sequence, 465 residues long: Phospholipase A1-II 5 (465 aa).

Ser233 acts as the Acyl-ester intermediate in catalysis. Residues Ser233, Asp297, and His336 each act as charge relay system in the active site.

This sequence belongs to the AB hydrolase superfamily. Lipase family.

The protein localises to the cytoplasm. Its function is as follows. Acylhydrolase that catalyzes the hydrolysis of phospholipids at the sn-1 position. The polypeptide is Phospholipase A1-II 5 (Oryza sativa subsp. japonica (Rice)).